The following is a 203-amino-acid chain: Outer-membrane lipoprotein carrier protein (203 aa).

An N-terminal signal peptide occupies residues Met1–Tyr20.

It belongs to the LolA family. Monomer.

It is found in the periplasm. In terms of biological role, participates in the translocation of lipoproteins from the inner membrane to the outer membrane. Only forms a complex with a lipoprotein if the residue after the N-terminal Cys is not an aspartate (The Asp acts as a targeting signal to indicate that the lipoprotein should stay in the inner membrane). In Pectobacterium carotovorum subsp. carotovorum (strain PC1), this protein is Outer-membrane lipoprotein carrier protein.